The chain runs to 342 residues: Phosphate acyltransferase (342 aa).

This sequence belongs to the PlsX family. Homodimer. Probably interacts with PlsY.

Its subcellular location is the cytoplasm. It carries out the reaction a fatty acyl-[ACP] + phosphate = an acyl phosphate + holo-[ACP]. It participates in lipid metabolism; phospholipid metabolism. Its function is as follows. Catalyzes the reversible formation of acyl-phosphate (acyl-PO(4)) from acyl-[acyl-carrier-protein] (acyl-ACP). This enzyme utilizes acyl-ACP as fatty acyl donor, but not acyl-CoA. The protein is Phosphate acyltransferase of Blochmanniella pennsylvanica (strain BPEN).